Reading from the N-terminus, the 351-residue chain is Histidinol-phosphate aminotransferase (351 aa).

Position 221 is an N6-(pyridoxal phosphate)lysine (lysine 221).

It belongs to the class-II pyridoxal-phosphate-dependent aminotransferase family. Histidinol-phosphate aminotransferase subfamily. As to quaternary structure, homodimer. Pyridoxal 5'-phosphate serves as cofactor.

The enzyme catalyses L-histidinol phosphate + 2-oxoglutarate = 3-(imidazol-4-yl)-2-oxopropyl phosphate + L-glutamate. Its pathway is amino-acid biosynthesis; L-histidine biosynthesis; L-histidine from 5-phospho-alpha-D-ribose 1-diphosphate: step 7/9. The sequence is that of Histidinol-phosphate aminotransferase from Staphylococcus saprophyticus subsp. saprophyticus (strain ATCC 15305 / DSM 20229 / NCIMB 8711 / NCTC 7292 / S-41).